A 416-amino-acid chain; its full sequence is Glutamyl-tRNA reductase (416 aa).

Residues 49–52 (TCNR), Ser105, 110–112 (EPQ), and Gln116 contribute to the substrate site. Cys50 acts as the Nucleophile in catalysis. 185–190 (GAGETI) serves as a coordination point for NADP(+).

It belongs to the glutamyl-tRNA reductase family. As to quaternary structure, homodimer.

It carries out the reaction (S)-4-amino-5-oxopentanoate + tRNA(Glu) + NADP(+) = L-glutamyl-tRNA(Glu) + NADPH + H(+). The protein operates within porphyrin-containing compound metabolism; protoporphyrin-IX biosynthesis; 5-aminolevulinate from L-glutamyl-tRNA(Glu): step 1/2. Its function is as follows. Catalyzes the NADPH-dependent reduction of glutamyl-tRNA(Glu) to glutamate 1-semialdehyde (GSA). The sequence is that of Glutamyl-tRNA reductase from Shewanella pealeana (strain ATCC 700345 / ANG-SQ1).